Consider the following 392-residue polypeptide: N-acetylneuraminate epimerase (392 aa).

A signal peptide spans 1-35 (MTQLYPQYKKQLTTKIVLFSALSLLMMASLPNTYA). Kelch repeat units follow at residues 56–100 (SLYV…VVLA), 102–155 (KLYV…TTLD), 157–192 (SQAV…AVIN), 193–238 (AYFN…SRMD), 241–290 (LILI…LAGA), 312–361 (KQFN…QGPD), and 363–392 (VILI…LHIE). E247 (proton acceptor) is an active-site residue.

Belongs to the NanM family. As to quaternary structure, homodimer.

Its subcellular location is the periplasm. It carries out the reaction N-acetyl-alpha-neuraminate = N-acetyl-beta-neuraminate. In terms of biological role, converts alpha-N-acetylneuranimic acid (Neu5Ac) to the beta-anomer, accelerating the equilibrium between the alpha- and beta-anomers. Probably facilitates sialidase-negative bacteria to compete successfully for limited amounts of extracellular Neu5Ac, which is likely taken up in the beta-anomer. In addition, the rapid removal of sialic acid from solution might be advantageous to the bacterium to damp down host responses. The sequence is that of N-acetylneuraminate epimerase from Yersinia pseudotuberculosis serotype O:1b (strain IP 31758).